Here is a 558-residue protein sequence, read N- to C-terminus: Glutamine--tRNA ligase (558 aa).

The short motif at 36–46 (PEPNGYLHIGH) is the 'HIGH' region element. ATP is bound by residues 37–39 (EPN) and 43–49 (HIGHAKS). L-glutamine-binding residues include D69 and Y214. Residues T233, 263–264 (RL), and 271–273 (LSK) each bind ATP. Residues 270–274 (LLSKR) carry the 'KMSKS' region motif.

Belongs to the class-I aminoacyl-tRNA synthetase family. In terms of assembly, monomer.

It is found in the cytoplasm. It carries out the reaction tRNA(Gln) + L-glutamine + ATP = L-glutaminyl-tRNA(Gln) + AMP + diphosphate. In Bradyrhizobium diazoefficiens (strain JCM 10833 / BCRC 13528 / IAM 13628 / NBRC 14792 / USDA 110), this protein is Glutamine--tRNA ligase.